We begin with the raw amino-acid sequence, 79 residues long: Antimicrobial peptide ToAP2 (79 aa).

The signal sequence occupies residues 1–23 (MQFKKQLLVIFFAYFLVVNESEA). Residues 50-79 (SLMKRELKNLYDPYQRSVEMERLLKELPLY) constitute a propeptide that is removed on maturation.

This sequence belongs to the non-disulfide-bridged peptide (NDBP) superfamily. Medium-length antimicrobial peptide (group 3) family. In terms of tissue distribution, expressed by the venom gland.

The protein localises to the secreted. Its subcellular location is the target cell membrane. In terms of biological role, antimicrobial peptide. Shows antibacterial activity against all M.massiliense bacterial strains tested. Has antifungal activity against Candida spp. and two Cryptococcus neoformans strains with MICs values ranging from 6.25 to 200 uM. Also shows an inhibitory activity on C.albicans biofilms at high concentrations. Exhibits chemotactic activity for monocytes, neutrophils, and eosinophils. Shows low cytotoxic activity and has weak hemolytic activity on human erythrocytes. In vivo, treatment of infected mice with M.massiliense reduces the bacterial load in the liver, lung, and spleen. May act by disrupting the integrity of the bacterial cell membrane. In Tityus obscurus (Amazonian scorpion), this protein is Antimicrobial peptide ToAP2.